Reading from the N-terminus, the 423-residue chain is Sphingomyelin phosphodiesterase 2 (423 aa).

E49 serves as a coordination point for Mg(2+). The active-site Proton acceptor is H272. Helical transmembrane passes span 330-350 (VIGLGLLLLALLCVLAAGGGA) and 354-374 (AILLWTPSVGLVLWAGAFYLF). The tract at residues 400–423 (QDLGPEPQPALLLGQQEGDRTKEQ) is disordered.

Belongs to the neutral sphingomyelinase family. Requires Mg(2+) as cofactor.

The protein resides in the cell membrane. The enzyme catalyses a sphingomyelin + H2O = phosphocholine + an N-acylsphing-4-enine + H(+). The catalysed reaction is an N-(acyl)-sphingosylphosphocholine + H2O = an N-acyl-sphingoid base + phosphocholine + H(+). It carries out the reaction 1-O-octadecyl-sn-glycero-3-phosphocholine + H2O = 1-O-octadecyl-sn-glycerol + phosphocholine + H(+). It catalyses the reaction 1-O-hexadecyl-sn-glycero-3-phosphocholine + H2O = 1-O-hexadecyl-sn-glycerol + phosphocholine + H(+). The enzyme catalyses 1-hexadecanoyl-sn-glycero-3-phosphocholine + H2O = 1-hexadecanoyl-sn-glycerol + phosphocholine + H(+). The catalysed reaction is a sphingosylphosphocholine + H2O = a sphingoid base + phosphocholine + H(+). The protein operates within lipid metabolism; sphingolipid metabolism. Its function is as follows. Catalyzes, at least in vitro, the hydrolysis of sphingomyelin to form ceramide and phosphocholine. Also hydrolyzes 1-O-alkyl-2-lyso-sn-glycero-3-phosphocholine (lyso-platelet-activating factor) in vivo. Also acts on 1-acyl-2-lyso-sn-glycero-3-phosphocholine (lyso-PC) and sphingosylphosphocholine. The polypeptide is Sphingomyelin phosphodiesterase 2 (Homo sapiens (Human)).